The chain runs to 244 residues: Capsid protein (244 aa).

The Bipartite nuclear localization signal motif lies at 1–24 (MSTSKRKRGDDSNWSKRVTKKKPS). The segment at 1-39 (MSTSKRKRGDDSNWSKRVTKKKPSSAGLKRAGSKADRPS) is disordered.

The protein belongs to the geminiviridae capsid protein family. Homomultimer. Interacts with the movement protein. Binds to single-stranded and double-stranded viral DNA.

The protein localises to the virion. Its subcellular location is the host nucleus. Encapsidates the viral genome into characteristic twinned ('geminate') particles. Binds the genomic viral ssDNA and shuttles it into and out of the cell nucleus. Plays a role in protection of the genome from degradation, virus acquisition and transmission by insect vectors, infectivity, and systemic movement. The CP of monopartite geminiviruses is absolutely essential for virus movement. The polypeptide is Capsid protein (Avena sativa (Oat)).